The chain runs to 136 residues: Large ribosomal subunit protein uL22 (136 aa).

It belongs to the universal ribosomal protein uL22 family. As to quaternary structure, part of the 50S ribosomal subunit.

This protein binds specifically to 23S rRNA; its binding is stimulated by other ribosomal proteins, e.g. L4, L17, and L20. It is important during the early stages of 50S assembly. It makes multiple contacts with different domains of the 23S rRNA in the assembled 50S subunit and ribosome. In terms of biological role, the globular domain of the protein is located near the polypeptide exit tunnel on the outside of the subunit, while an extended beta-hairpin is found that lines the wall of the exit tunnel in the center of the 70S ribosome. The sequence is that of Large ribosomal subunit protein uL22 from Parabacteroides distasonis (strain ATCC 8503 / DSM 20701 / CIP 104284 / JCM 5825 / NCTC 11152).